The primary structure comprises 387 residues: Cytochrome b (387 aa).

4 consecutive transmembrane segments (helical) span residues F32 to C52, F76 to G98, T113 to C133, and F179 to I199. Heme b-binding residues include H82 and H96. Residues H183 and H197 each coordinate heme b. Residue H202 participates in a ubiquinone binding. Transmembrane regions (helical) follow at residues Y225–F245, Q289–D309, F321–G341, and F348–P368.

It belongs to the cytochrome b family. Fungal cytochrome b-c1 complex contains 10 subunits; 3 respiratory subunits, 2 core proteins and 5 low-molecular weight proteins. Cytochrome b-c1 complex is a homodimer. The cofactor is heme b.

It localises to the mitochondrion inner membrane. Functionally, component of the ubiquinol-cytochrome c reductase complex (complex III or cytochrome b-c1 complex) that is part of the mitochondrial respiratory chain. The b-c1 complex mediates electron transfer from ubiquinol to cytochrome c. Contributes to the generation of a proton gradient across the mitochondrial membrane that is then used for ATP synthesis. The sequence is that of Cytochrome b (cob) from Schizosaccharomyces pombe (strain 972 / ATCC 24843) (Fission yeast).